The chain runs to 413 residues: Glucose-1-phosphatase (413 aa).

Positions 1–22 (MKKSLLAVAVAGAVLLSSAVQA) are cleaved as a signal peptide. Arg-39 is a binding site for substrate. His-40 serves as the catalytic Nucleophile. Residues Arg-43, Arg-116, and Glu-218 each contribute to the substrate site. Residue Asp-312 is the Proton donor of the active site.

It belongs to the histidine acid phosphatase family. In terms of assembly, homodimer.

Its subcellular location is the periplasm. The catalysed reaction is alpha-D-glucose 1-phosphate + H2O = D-glucose + phosphate. The polypeptide is Glucose-1-phosphatase (agp) (Salmonella typhimurium (strain LT2 / SGSC1412 / ATCC 700720)).